Consider the following 406-residue polypeptide: 8-amino-7-oxononanoate synthase (406 aa).

Substrate is bound at residue R21. A pyridoxal 5'-phosphate-binding site is contributed by 112-113 (GY). H137 serves as a coordination point for substrate. S183, H211, and T239 together coordinate pyridoxal 5'-phosphate. K242 is subject to N6-(pyridoxal phosphate)lysine. Residue T358 coordinates substrate.

This sequence belongs to the class-II pyridoxal-phosphate-dependent aminotransferase family. BioF subfamily. As to quaternary structure, homodimer. Pyridoxal 5'-phosphate serves as cofactor.

The enzyme catalyses 6-carboxyhexanoyl-[ACP] + L-alanine + H(+) = (8S)-8-amino-7-oxononanoate + holo-[ACP] + CO2. The protein operates within cofactor biosynthesis; biotin biosynthesis. In terms of biological role, catalyzes the decarboxylative condensation of pimeloyl-[acyl-carrier protein] and L-alanine to produce 8-amino-7-oxononanoate (AON), [acyl-carrier protein], and carbon dioxide. The polypeptide is 8-amino-7-oxononanoate synthase (Burkholderia orbicola (strain MC0-3)).